Here is a 326-residue protein sequence, read N- to C-terminus: Ras association domain-containing protein 2 (326 aa).

A disordered region spans residues 111-133 (EVDAPPEGDQMPSSTDSRGLKPL). The 89-residue stretch at 176 to 264 (YNHKTSVFTP…SKVFLMEKDQ (89 aa)) folds into the Ras-associating domain. The region spanning 272-319 (VAQYIKFEMPVLKSFIQKLQEEEDREVKKLMRKYTVLRLMIRQRLEEI) is the SARAH domain.

In terms of assembly, interacts directly with activated KRAS in a GTP-dependent manner. Interacts (via SARAH domain) with STK3/MST2 and STK4/MST1. In terms of processing, phosphorylated by STK3/MST2 and STK4/MST1. In terms of tissue distribution, widely expressed with highest levels in brain, placenta, peripheral blood and lung. Frequently down-regulated in lung tumor cell lines.

The protein resides in the nucleus. It is found in the cytoplasm. Its subcellular location is the chromosome. It localises to the centromere. The protein localises to the kinetochore. Potential tumor suppressor. Acts as a KRAS-specific effector protein. May promote apoptosis and cell cycle arrest. Stabilizes STK3/MST2 by protecting it from proteasomal degradation. This chain is Ras association domain-containing protein 2 (RASSF2), found in Homo sapiens (Human).